The sequence spans 518 residues: Filamentous growth regulator 15 (518 aa).

Residues methionine 1–asparagine 41 are compositionally biased toward polar residues. Disordered regions lie at residues methionine 1–arginine 63, valine 75–lysine 101, and lysine 261–arginine 307. Positions glutamine 42–glutamine 52 are enriched in low complexity. Residues proline 77–valine 95 are compositionally biased toward polar residues. Positions serine 262 to valine 274 are enriched in basic residues. Over residues serine 283–asparagine 298 the composition is skewed to low complexity. Residues histidine 374 to histidine 406 form a C2H2-type zinc finger. The interval arginine 492–lysine 518 is disordered. The span at serine 505–lysine 518 shows a compositional bias: acidic residues.

The protein resides in the nucleus. In terms of biological role, probable transcription factor involved in the regulation of filamentous growth. In Candida albicans (strain SC5314 / ATCC MYA-2876) (Yeast), this protein is Filamentous growth regulator 15 (FGR15).